Here is a 1134-residue protein sequence, read N- to C-terminus: Myosin-4 (1134 aa).

The Myosin N-terminal SH3-like domain occupies 110–160 (REKLCVWCRVAANGQWHLGKIHSTSSSDDVCVMLSANDDVRTMEEIFPANP). The Myosin motor domain occupies 164–830 (EGVEDLTQLS…VISVLEERKK (667 aa)). ATP contacts are provided by residues 255–262 (GESGAGKT) and 304–312 (NDNSSRFGK). Actin-binding regions lie at residues 589–623 (LIEK…KQHL) and 710–732 (LFKL…KPNS). 3 consecutive IQ domains span residues 832–861 (VLRG…AAVI), 855–884 (MRNA…SAIV), and 891–920 (ELDA…KNKP). Residues 913–939 (STQQKNKPRNEKKKTRRKSTKRVSEDK) are disordered. The span at 918–933 (NKPRNEKKKTRRKSTK) shows a compositional bias: basic residues. Positions 953-999 (LADLQSRVLKVEAAIMQKEDENTALQEELQRFEERWLENETRMKSME) form a coiled coil.

Belongs to the TRAFAC class myosin-kinesin ATPase superfamily. Myosin family. Plant myosin class VIII subfamily. Homodimer.

Its function is as follows. Myosin heavy chain that is required for the cell cycle-regulated transport of various organelles and proteins for their segregation. Functions by binding with its tail domain to receptor proteins on organelles and exerting force with its N-terminal motor domain against actin filaments, thereby transporting its cargo along polarized actin cables. The protein is Myosin-4 (VIII-B) of Arabidopsis thaliana (Mouse-ear cress).